The primary structure comprises 180 residues: NAD(P)H-quinone oxidoreductase subunit I, chloroplastic (180 aa).

4Fe-4S ferredoxin-type domains are found at residues 55-84 (GRIH…VDWR) and 95-124 (LNYS…MTEE). The [4Fe-4S] cluster site is built by cysteine 64, cysteine 67, cysteine 70, cysteine 74, cysteine 104, cysteine 107, cysteine 110, and cysteine 114.

This sequence belongs to the complex I 23 kDa subunit family. As to quaternary structure, NDH is composed of at least 16 different subunits, 5 of which are encoded in the nucleus. It depends on [4Fe-4S] cluster as a cofactor.

It is found in the plastid. The protein localises to the chloroplast thylakoid membrane. The catalysed reaction is a plastoquinone + NADH + (n+1) H(+)(in) = a plastoquinol + NAD(+) + n H(+)(out). The enzyme catalyses a plastoquinone + NADPH + (n+1) H(+)(in) = a plastoquinol + NADP(+) + n H(+)(out). In terms of biological role, NDH shuttles electrons from NAD(P)H:plastoquinone, via FMN and iron-sulfur (Fe-S) centers, to quinones in the photosynthetic chain and possibly in a chloroplast respiratory chain. The immediate electron acceptor for the enzyme in this species is believed to be plastoquinone. Couples the redox reaction to proton translocation, and thus conserves the redox energy in a proton gradient. The protein is NAD(P)H-quinone oxidoreductase subunit I, chloroplastic of Hordeum vulgare (Barley).